The sequence spans 187 residues: Hypoxanthine/guanine phosphoribosyltransferase (187 aa).

It belongs to the purine/pyrimidine phosphoribosyltransferase family. Archaeal HPRT subfamily. Homodimer.

Its subcellular location is the cytoplasm. The enzyme catalyses IMP + diphosphate = hypoxanthine + 5-phospho-alpha-D-ribose 1-diphosphate. The catalysed reaction is GMP + diphosphate = guanine + 5-phospho-alpha-D-ribose 1-diphosphate. The protein operates within purine metabolism; IMP biosynthesis via salvage pathway; IMP from hypoxanthine: step 1/1. In terms of biological role, catalyzes a salvage reaction resulting in the formation of IMP that is energically less costly than de novo synthesis. This Methanococcus voltae (strain ATCC BAA-1334 / A3) protein is Hypoxanthine/guanine phosphoribosyltransferase.